We begin with the raw amino-acid sequence, 200 residues long: uncharacterized protein (200 aa).

Disordered stretches follow at residues 1 to 27 (MTDT…EAET), 42 to 79 (IPKE…STNA), and 169 to 200 (HGRA…EHGR). Residues 187 to 200 (RQMEKTGAGREHGR) show a composition bias toward basic and acidic residues.

This is an uncharacterized protein from Shigella flexneri.